The sequence spans 246 residues: MADS-box protein EJ2 (246 aa).

An MADS-box domain is found at 1-61; sequence MGRGRVELKR…GKLYEFCSTS (61 aa). The 91-residue stretch at 87–177 folds into the K-box domain; it reads TQNNYHEYLR…RRKLEESVAG (91 aa).

The protein resides in the nucleus. In terms of biological role, MADS-box transcription factor that acts redundantly with J2 to control meristem maturation and inflorescence architecture. The protein is MADS-box protein EJ2 of Solanum lycopersicum (Tomato).